A 231-amino-acid chain; its full sequence is 5'-methylthioadenosine/S-adenosylhomocysteine nucleosidase (231 aa).

The active-site Proton acceptor is the Glu-12. Substrate-binding positions include Gly-78, Val-153, and 174-175; that span reads ME. The active-site Proton donor is the Asp-198.

Belongs to the PNP/UDP phosphorylase family. MtnN subfamily.

The catalysed reaction is S-adenosyl-L-homocysteine + H2O = S-(5-deoxy-D-ribos-5-yl)-L-homocysteine + adenine. It catalyses the reaction S-methyl-5'-thioadenosine + H2O = 5-(methylsulfanyl)-D-ribose + adenine. The enzyme catalyses 5'-deoxyadenosine + H2O = 5-deoxy-D-ribose + adenine. Its pathway is amino-acid biosynthesis; L-methionine biosynthesis via salvage pathway; S-methyl-5-thio-alpha-D-ribose 1-phosphate from S-methyl-5'-thioadenosine (hydrolase route): step 1/2. Its function is as follows. Catalyzes the irreversible cleavage of the glycosidic bond in both 5'-methylthioadenosine (MTA) and S-adenosylhomocysteine (SAH/AdoHcy) to adenine and the corresponding thioribose, 5'-methylthioribose and S-ribosylhomocysteine, respectively. Also cleaves 5'-deoxyadenosine, a toxic by-product of radical S-adenosylmethionine (SAM) enzymes, into 5-deoxyribose and adenine. In Aliivibrio fischeri (Vibrio fischeri), this protein is 5'-methylthioadenosine/S-adenosylhomocysteine nucleosidase.